Reading from the N-terminus, the 271-residue chain is Interleukin-1 alpha (271 aa).

Residues 1-112 (MAKVPDMFED…DSEEEIIKPR (112 aa)) constitute a propeptide that is removed on maturation. At lysine 82 the chain carries N6-acetyllysine. Residues 82–86 (KKRRL) form a nuclear localization signal (NLS) region. The residue at position 87 (serine 87) is a Phosphoserine. N-linked (GlcNAc...) asparagine glycosylation is found at asparagine 102, asparagine 121, asparagine 137, asparagine 141, and asparagine 211.

It belongs to the IL-1 family. In terms of assembly, monomer. Interacts with TMED10; the interaction mediates the translocation from the cytoplasm into the ERGIC (endoplasmic reticulum-Golgi intermediate compartment) and thereby secretion. Interacts with IL1R1. Interacts with S100A13; this interaction is the first step in the export of IL1A, followed by direct translocation of this complex across the plasma membrane. Acetylated within its nuclear localization sequence, which impacts subcellular localization. Post-translationally, proteolytic processed by CAPN1 in a calcium-dependent manner. Cleavage from 31 kDa precursor to 18 kDa biologically active molecules. In terms of processing, phosphorylated. Phosphorylation greatly enhances susceptibility to digestion and promotes the conversion of pre-IL1A alpha to the biologically active IL1A.

The protein localises to the nucleus. It localises to the cytoplasm. It is found in the secreted. Functionally, cytokine constitutively present intracellularly in nearly all resting non-hematopoietic cells that plays an important role in inflammation and bridges the innate and adaptive immune systems. After binding to its receptor IL1R1 together with its accessory protein IL1RAP, forms the high affinity interleukin-1 receptor complex. Signaling involves the recruitment of adapter molecules such as MYD88, IRAK1 or IRAK4. In turn, mediates the activation of NF-kappa-B and the three MAPK pathways p38, p42/p44 and JNK pathways. Within the cell, acts as an alarmin and cell death results in its liberation in the extracellular space after disruption of the cell membrane to induce inflammation and alert the host to injury or damage. In addition to its role as a danger signal, which occurs when the cytokine is passively released by cell necrosis, directly senses DNA damage and acts as signal for genotoxic stress without loss of cell integrity. The chain is Interleukin-1 alpha (IL1A) from Macaca mulatta (Rhesus macaque).